Reading from the N-terminus, the 707-residue chain is Lipase maturation factor 2 (707 aa).

10 helical membrane passes run 10–30, 78–98, 102–122, 126–146, 158–178, 220–240, 256–276, 309–329, 358–378, and 395–415; these read AFLW…YVQI, MELI…FSCL, LVFL…QVFL, WDSL…LHAM, GVTF…SGVV, FSVV…FLPF, ILII…VLCC, LVSL…VKYF, ITFP…LKGM, and LQWL…LVPY. A glycan (N-linked (GlcNAc...) asparagine) is linked at asparagine 483. Residues 634–654 form a helical membrane-spanning segment; the sequence is LLLHSFIFGIFTIYFLQAMFG. The tract at residues 661 to 707 is disordered; that stretch reads VAKQRHSMPPNEKKKQKPNSGQGESASSKSSGHGTDTVRRNKKNEKS. The segment covering 680-694 has biased composition (low complexity); it reads SGQGESASSKSSGHG. A compositionally biased stretch (basic and acidic residues) spans 696 to 707; the sequence is DTVRRNKKNEKS.

The protein belongs to the lipase maturation factor family.

The protein resides in the endoplasmic reticulum membrane. Involved in the maturation of specific proteins in the endoplasmic reticulum. The protein is Lipase maturation factor 2 (lmf2) of Xenopus laevis (African clawed frog).